The sequence spans 428 residues: Phosphomethylpyrimidine synthase (428 aa).

Substrate-binding positions include Asn-66, Met-94, Tyr-123, His-162, 184–186 (SRG), 225–228 (DALR), and Glu-264. His-268 serves as a coordination point for Zn(2+). Tyr-291 contributes to the substrate binding site. His-332 serves as a coordination point for Zn(2+). Cys-408, Cys-411, and Cys-415 together coordinate [4Fe-4S] cluster.

This sequence belongs to the ThiC family. [4Fe-4S] cluster is required as a cofactor.

It carries out the reaction 5-amino-1-(5-phospho-beta-D-ribosyl)imidazole + S-adenosyl-L-methionine = 4-amino-2-methyl-5-(phosphooxymethyl)pyrimidine + CO + 5'-deoxyadenosine + formate + L-methionine + 3 H(+). Its pathway is cofactor biosynthesis; thiamine diphosphate biosynthesis. Its function is as follows. Catalyzes the synthesis of the hydroxymethylpyrimidine phosphate (HMP-P) moiety of thiamine from aminoimidazole ribotide (AIR) in a radical S-adenosyl-L-methionine (SAM)-dependent reaction. This is Phosphomethylpyrimidine synthase from Sulfolobus acidocaldarius (strain ATCC 33909 / DSM 639 / JCM 8929 / NBRC 15157 / NCIMB 11770).